Reading from the N-terminus, the 681-residue chain is DNA ligase (681 aa).

Residues 45–49 (DFDFD), 94–95 (SL), and glutamate 120 each bind NAD(+). Residue lysine 122 is the N6-AMP-lysine intermediate of the active site. Residues arginine 143, glutamate 177, lysine 289, and lysine 313 each coordinate NAD(+). Zn(2+) is bound by residues cysteine 403, cysteine 406, cysteine 421, and cysteine 426. One can recognise a BRCT domain in the interval 593 to 681 (ADQQPFAGQS…SLKIDFKNLI (89 aa)).

It belongs to the NAD-dependent DNA ligase family. LigA subfamily. Mg(2+) is required as a cofactor. Requires Mn(2+) as cofactor.

The catalysed reaction is NAD(+) + (deoxyribonucleotide)n-3'-hydroxyl + 5'-phospho-(deoxyribonucleotide)m = (deoxyribonucleotide)n+m + AMP + beta-nicotinamide D-nucleotide.. Its function is as follows. DNA ligase that catalyzes the formation of phosphodiester linkages between 5'-phosphoryl and 3'-hydroxyl groups in double-stranded DNA using NAD as a coenzyme and as the energy source for the reaction. It is essential for DNA replication and repair of damaged DNA. The chain is DNA ligase from Leptospira interrogans serogroup Icterohaemorrhagiae serovar copenhageni (strain Fiocruz L1-130).